A 197-amino-acid polypeptide reads, in one-letter code: UPF0301 protein BAV3012 (197 aa).

It belongs to the UPF0301 (AlgH) family.

The protein is UPF0301 protein BAV3012 of Bordetella avium (strain 197N).